We begin with the raw amino-acid sequence, 88 residues long: Alpha-latrotoxin associated low molecular weight protein 2 (88 aa).

A signal peptide spans 1–19 (MLKLICIAFLVTVLTLVAG). 3 disulfides stabilise this stretch: cysteine 30-cysteine 66, cysteine 46-cysteine 62, and cysteine 49-cysteine 75.

The protein belongs to the arthropod CHH/MIH/GIH/VIH hormone family. In terms of tissue distribution, expressed by the venom gland.

Its subcellular location is the secreted. In terms of biological role, may increase the toxicity of alpha-latrotoxin and/or other venom components. Is non-toxic to mice and to the cockroach Periplaneta americana. The protein is Alpha-latrotoxin associated low molecular weight protein 2 of Latrodectus hesperus (Western black widow spider).